Reading from the N-terminus, the 126-residue chain is Aspartate 1-decarboxylase (126 aa).

Ser-25 (schiff-base intermediate with substrate; via pyruvic acid) is an active-site residue. Ser-25 carries the pyruvic acid (Ser) modification. A substrate-binding site is contributed by Thr-57. Tyr-58 (proton donor) is an active-site residue. 73 to 75 provides a ligand contact to substrate; it reads GAA.

It belongs to the PanD family. Heterooctamer of four alpha and four beta subunits. Requires pyruvate as cofactor. Is synthesized initially as an inactive proenzyme, which is activated by self-cleavage at a specific serine bond to produce a beta-subunit with a hydroxyl group at its C-terminus and an alpha-subunit with a pyruvoyl group at its N-terminus.

The protein localises to the cytoplasm. It catalyses the reaction L-aspartate + H(+) = beta-alanine + CO2. It participates in cofactor biosynthesis; (R)-pantothenate biosynthesis; beta-alanine from L-aspartate: step 1/1. Functionally, catalyzes the pyruvoyl-dependent decarboxylation of aspartate to produce beta-alanine. This is Aspartate 1-decarboxylase from Chromohalobacter salexigens (strain ATCC BAA-138 / DSM 3043 / CIP 106854 / NCIMB 13768 / 1H11).